A 378-amino-acid chain; its full sequence is UPF0754 membrane protein BALH_0780 (378 aa).

A run of 2 helical transmembrane segments spans residues 1 to 21 and 357 to 377; these read MNIWLSMLTTTGLGAIIGGFT and YLGALLGGMIGIVQGLLLLFL.

This sequence belongs to the UPF0754 family.

It localises to the cell membrane. The chain is UPF0754 membrane protein BALH_0780 from Bacillus thuringiensis (strain Al Hakam).